The following is a 579-amino-acid chain: Plastidial pyruvate kinase 2 (579 aa).

The N-terminal 63 residues, 1 to 63 (MAQVVATRSI…SRRVVDTTVR (63 aa)), are a transit peptide targeting the chloroplast. Residues 6 to 24 (ATRSIQGSMLSPNGGSVST) are compositionally biased toward polar residues. The segment at 6 to 26 (ATRSIQGSMLSPNGGSVSTRS) is disordered. Residue Arg-140 participates in substrate binding. Residues Asn-142, Ser-144, Asp-175, and Thr-176 each coordinate K(+). 142–145 (NMSH) provides a ligand contact to ATP. Arg-182 is an ATP binding site. A substrate-binding site is contributed by Lys-325. Position 327 (Glu-327) interacts with Mg(2+). Residues Gly-350, Asp-351, and Thr-383 each contribute to the substrate site. A Mg(2+)-binding site is contributed by Asp-351.

This sequence belongs to the pyruvate kinase family. In terms of assembly, oligomer of alpha and beta subunits. Requires Mg(2+) as cofactor. K(+) is required as a cofactor. In terms of tissue distribution, mostly expressed in seeds, and, to a lower extent, in roots, leaves (veins and trichomes), inflorescences, siliques, pollen (grains and tubes) and flowers (sepals and petals).

Its subcellular location is the plastid. The protein resides in the chloroplast stroma. It localises to the mitochondrion. The catalysed reaction is pyruvate + ATP = phosphoenolpyruvate + ADP + H(+). Its pathway is carbohydrate degradation; glycolysis; pyruvate from D-glyceraldehyde 3-phosphate: step 5/5. In terms of biological role, required for plastidial pyruvate kinase activity. Involved in seed oil accumulation, embryo development and seed storage compounds mobilization upon germination. The protein is Plastidial pyruvate kinase 2 (PKP2) of Arabidopsis thaliana (Mouse-ear cress).